Consider the following 213-residue polypeptide: ATP phosphoribosyltransferase (213 aa).

The protein belongs to the ATP phosphoribosyltransferase family. Short subfamily. In terms of assembly, heteromultimer composed of HisG and HisZ subunits.

The protein localises to the cytoplasm. The catalysed reaction is 1-(5-phospho-beta-D-ribosyl)-ATP + diphosphate = 5-phospho-alpha-D-ribose 1-diphosphate + ATP. It functions in the pathway amino-acid biosynthesis; L-histidine biosynthesis; L-histidine from 5-phospho-alpha-D-ribose 1-diphosphate: step 1/9. In terms of biological role, catalyzes the condensation of ATP and 5-phosphoribose 1-diphosphate to form N'-(5'-phosphoribosyl)-ATP (PR-ATP). Has a crucial role in the pathway because the rate of histidine biosynthesis seems to be controlled primarily by regulation of HisG enzymatic activity. This chain is ATP phosphoribosyltransferase, found in Listeria monocytogenes serotype 4b (strain F2365).